Here is a 170-residue protein sequence, read N- to C-terminus: Small ribosomal subunit protein bS18c (170 aa).

Residues 1–61 are disordered; the sequence is MYTSKQPFLK…RRPRIGPGDR (61 aa). Residues 13–26 show a composition bias toward polar residues; that stretch reads QPFSKSKQTFNKSK. Positions 27-55 are enriched in basic residues; the sequence is QPFRKSKQTFRKFKQPFRKSKQPFRRRPR.

It belongs to the bacterial ribosomal protein bS18 family. As to quaternary structure, part of the 30S ribosomal subunit.

Its subcellular location is the plastid. It is found in the chloroplast. This chain is Small ribosomal subunit protein bS18c, found in Hordeum vulgare (Barley).